The sequence spans 239 residues: Purine nucleoside phosphorylase DeoD-type (239 aa).

H5 is an a purine D-ribonucleoside binding site. Phosphate contacts are provided by residues G21, R25, R44, and 88–91; that span reads RIGS. A purine D-ribonucleoside-binding positions include 180 to 182 and 204 to 205; these read EME and TD. The active-site Proton donor is the D205.

Belongs to the PNP/UDP phosphorylase family. Homohexamer; trimer of homodimers.

It catalyses the reaction a purine D-ribonucleoside + phosphate = a purine nucleobase + alpha-D-ribose 1-phosphate. The enzyme catalyses a purine 2'-deoxy-D-ribonucleoside + phosphate = a purine nucleobase + 2-deoxy-alpha-D-ribose 1-phosphate. In terms of biological role, catalyzes the reversible phosphorolytic breakdown of the N-glycosidic bond in the beta-(deoxy)ribonucleoside molecules, with the formation of the corresponding free purine bases and pentose-1-phosphate. The protein is Purine nucleoside phosphorylase DeoD-type of Aliivibrio fischeri (strain ATCC 700601 / ES114) (Vibrio fischeri).